A 258-amino-acid polypeptide reads, in one-letter code: Imidazole glycerol phosphate synthase subunit HisF (258 aa).

Active-site residues include aspartate 11 and aspartate 130.

Belongs to the HisA/HisF family. Heterodimer of HisH and HisF.

The protein localises to the cytoplasm. It catalyses the reaction 5-[(5-phospho-1-deoxy-D-ribulos-1-ylimino)methylamino]-1-(5-phospho-beta-D-ribosyl)imidazole-4-carboxamide + L-glutamine = D-erythro-1-(imidazol-4-yl)glycerol 3-phosphate + 5-amino-1-(5-phospho-beta-D-ribosyl)imidazole-4-carboxamide + L-glutamate + H(+). It functions in the pathway amino-acid biosynthesis; L-histidine biosynthesis; L-histidine from 5-phospho-alpha-D-ribose 1-diphosphate: step 5/9. In terms of biological role, IGPS catalyzes the conversion of PRFAR and glutamine to IGP, AICAR and glutamate. The HisF subunit catalyzes the cyclization activity that produces IGP and AICAR from PRFAR using the ammonia provided by the HisH subunit. This Pectobacterium carotovorum subsp. carotovorum (strain PC1) protein is Imidazole glycerol phosphate synthase subunit HisF.